The chain runs to 339 residues: UDP-N-acetylglucosamine--N-acetylmuramyl-(pentapeptide) pyrophosphoryl-undecaprenol N-acetylglucosamine transferase (339 aa).

UDP-N-acetyl-alpha-D-glucosamine is bound by residues 11 to 13 (TGG), asparagine 127, arginine 170, serine 188, isoleucine 235, and glutamine 280.

It belongs to the glycosyltransferase 28 family. MurG subfamily.

It localises to the cell inner membrane. It carries out the reaction di-trans,octa-cis-undecaprenyl diphospho-N-acetyl-alpha-D-muramoyl-L-alanyl-D-glutamyl-meso-2,6-diaminopimeloyl-D-alanyl-D-alanine + UDP-N-acetyl-alpha-D-glucosamine = di-trans,octa-cis-undecaprenyl diphospho-[N-acetyl-alpha-D-glucosaminyl-(1-&gt;4)]-N-acetyl-alpha-D-muramoyl-L-alanyl-D-glutamyl-meso-2,6-diaminopimeloyl-D-alanyl-D-alanine + UDP + H(+). It functions in the pathway cell wall biogenesis; peptidoglycan biosynthesis. Its function is as follows. Cell wall formation. Catalyzes the transfer of a GlcNAc subunit on undecaprenyl-pyrophosphoryl-MurNAc-pentapeptide (lipid intermediate I) to form undecaprenyl-pyrophosphoryl-MurNAc-(pentapeptide)GlcNAc (lipid intermediate II). In Thermotoga neapolitana (strain ATCC 49049 / DSM 4359 / NBRC 107923 / NS-E), this protein is UDP-N-acetylglucosamine--N-acetylmuramyl-(pentapeptide) pyrophosphoryl-undecaprenol N-acetylglucosamine transferase.